A 209-amino-acid chain; its full sequence is Ribosomal RNA large subunit methyltransferase E (209 aa).

S-adenosyl-L-methionine contacts are provided by Gly-63, Trp-65, Asp-83, Asp-99, and Asp-124. Lys-164 acts as the Proton acceptor in catalysis.

Belongs to the class I-like SAM-binding methyltransferase superfamily. RNA methyltransferase RlmE family.

It is found in the cytoplasm. It carries out the reaction uridine(2552) in 23S rRNA + S-adenosyl-L-methionine = 2'-O-methyluridine(2552) in 23S rRNA + S-adenosyl-L-homocysteine + H(+). Functionally, specifically methylates the uridine in position 2552 of 23S rRNA at the 2'-O position of the ribose in the fully assembled 50S ribosomal subunit. The chain is Ribosomal RNA large subunit methyltransferase E from Pectobacterium atrosepticum (strain SCRI 1043 / ATCC BAA-672) (Erwinia carotovora subsp. atroseptica).